The sequence spans 662 residues: DNA ligase (662 aa).

NAD(+) is bound by residues 34 to 38 (DYDYD), 83 to 84 (SI), and Glu113. Residue Lys115 is the N6-AMP-lysine intermediate of the active site. NAD(+) contacts are provided by Arg136, Glu172, Lys286, and Lys310. 4 residues coordinate Zn(2+): Cys404, Cys407, Cys422, and Cys427. A BRCT domain is found at 583–662 (RESSSCLGKT…NDLLKILYPN (80 aa)).

This sequence belongs to the NAD-dependent DNA ligase family. LigA subfamily. It depends on Mg(2+) as a cofactor. Mn(2+) is required as a cofactor.

The enzyme catalyses NAD(+) + (deoxyribonucleotide)n-3'-hydroxyl + 5'-phospho-(deoxyribonucleotide)m = (deoxyribonucleotide)n+m + AMP + beta-nicotinamide D-nucleotide.. DNA ligase that catalyzes the formation of phosphodiester linkages between 5'-phosphoryl and 3'-hydroxyl groups in double-stranded DNA using NAD as a coenzyme and as the energy source for the reaction. It is essential for DNA replication and repair of damaged DNA. This Chlamydia caviae (strain ATCC VR-813 / DSM 19441 / 03DC25 / GPIC) (Chlamydophila caviae) protein is DNA ligase.